The primary structure comprises 642 residues: Threonine--tRNA ligase (642 aa).

The region spanning 1-61 (MPAITLPDGS…AADAQVVFVT (61 aa)) is the TGS domain. The interval 243–536 (DHRRLGKEMD…LIEQYAGRFP (294 aa)) is catalytic. The Zn(2+) site is built by Cys336, His387, and His513.

It belongs to the class-II aminoacyl-tRNA synthetase family. Homodimer. Zn(2+) serves as cofactor.

It localises to the cytoplasm. It carries out the reaction tRNA(Thr) + L-threonine + ATP = L-threonyl-tRNA(Thr) + AMP + diphosphate + H(+). Functionally, catalyzes the attachment of threonine to tRNA(Thr) in a two-step reaction: L-threonine is first activated by ATP to form Thr-AMP and then transferred to the acceptor end of tRNA(Thr). Also edits incorrectly charged L-seryl-tRNA(Thr). In Granulibacter bethesdensis (strain ATCC BAA-1260 / CGDNIH1), this protein is Threonine--tRNA ligase.